The chain runs to 176 residues: Ribosome maturation factor RimM (176 aa).

In terms of domain architecture, PRC barrel spans 100–173; that stretch reads PEEYYDYQLI…RLRIDPPPGL (74 aa).

Belongs to the RimM family. Binds ribosomal protein uS19.

The protein resides in the cytoplasm. In terms of biological role, an accessory protein needed during the final step in the assembly of 30S ribosomal subunit, possibly for assembly of the head region. Essential for efficient processing of 16S rRNA. May be needed both before and after RbfA during the maturation of 16S rRNA. It has affinity for free ribosomal 30S subunits but not for 70S ribosomes. This Acidothermus cellulolyticus (strain ATCC 43068 / DSM 8971 / 11B) protein is Ribosome maturation factor RimM.